The following is a 187-amino-acid chain: Ubiquinone biosynthesis protein COQ4 homolog, mitochondrial (187 aa).

Zn(2+) is bound by residues histidine 77, aspartate 78, histidine 81, and glutamate 93.

This sequence belongs to the COQ4 family. In terms of assembly, component of a multi-subunit COQ enzyme complex. Zn(2+) is required as a cofactor.

It is found in the mitochondrion inner membrane. It catalyses the reaction a 4-hydroxy-3-methoxy-5-(all-trans-polyprenyl)benzoate + H(+) = a 2-methoxy-6-(all-trans-polyprenyl)phenol + CO2. The protein operates within cofactor biosynthesis; ubiquinone biosynthesis. In terms of biological role, lyase that catalyzes the C1-decarboxylation of 4-hydroxy-3-methoxy-5-(all-trans-polyprenyl)benzoic acid into 2-methoxy-6-(all-trans-polyprenyl)phenol during ubiquinone biosynthesis. The protein is Ubiquinone biosynthesis protein COQ4 homolog, mitochondrial of Leishmania major.